A 126-amino-acid polypeptide reads, in one-letter code: Protein ApaG (126 aa).

One can recognise an ApaG domain in the interval 2-126 (SDPRYQIDVS…FRLAVPGALH (125 aa)).

The chain is Protein ApaG from Pseudomonas putida (strain ATCC 700007 / DSM 6899 / JCM 31910 / BCRC 17059 / LMG 24140 / F1).